Consider the following 313-residue polypeptide: Homoserine O-succinyltransferase (313 aa).

Catalysis depends on C142, which acts as the Acyl-thioester intermediate. The substrate site is built by K163 and S192. Residue H235 is the Proton acceptor of the active site. The active site involves E237. A substrate-binding site is contributed by R249.

Belongs to the MetA family.

The protein localises to the cytoplasm. It carries out the reaction L-homoserine + succinyl-CoA = O-succinyl-L-homoserine + CoA. Its pathway is amino-acid biosynthesis; L-methionine biosynthesis via de novo pathway; O-succinyl-L-homoserine from L-homoserine: step 1/1. In terms of biological role, transfers a succinyl group from succinyl-CoA to L-homoserine, forming succinyl-L-homoserine. This chain is Homoserine O-succinyltransferase, found in Vibrio atlanticus (strain LGP32) (Vibrio splendidus (strain Mel32)).